Reading from the N-terminus, the 324-residue chain is Nucleotide-binding protein GbCGDNIH1_0395 (324 aa).

Residue 14–21 (GLSGAGKS) coordinates ATP. A GTP-binding site is contributed by 59-62 (DARS). Positions 286 to 324 (ISDDAPQAGAARVSTDDRNGRPEEHGSAQAPDELSRTTS) are disordered. A compositionally biased stretch (basic and acidic residues) spans 299–311 (STDDRNGRPEEHG).

It belongs to the RapZ-like family.

Its function is as follows. Displays ATPase and GTPase activities. The sequence is that of Nucleotide-binding protein GbCGDNIH1_0395 from Granulibacter bethesdensis (strain ATCC BAA-1260 / CGDNIH1).